Reading from the N-terminus, the 471-residue chain is Apyrase 1 (471 aa).

Residues 1–21 (MTAKRAIGRHESLADKVHRHR) lie on the Cytoplasmic side of the membrane. A helical; Signal-anchor for type II membrane protein membrane pass occupies residues 22 to 42 (GLLLVISIPIVLIALVLLLMP). Topologically, residues 43–471 (GTSTSVSVIE…GSAIEAVSSP (429 aa)) are lumenal. 72 to 82 (VIFDAGSSGSR) contacts ATP. Residue glutamate 194 is the Proton acceptor of the active site. 218–228 (GVVDLGGGSVQ) contacts ATP. Asparagine 333 carries an N-linked (GlcNAc...) asparagine glycan.

This sequence belongs to the GDA1/CD39 NTPase family. Requires Ca(2+) as cofactor. In terms of tissue distribution, expressed in roots, root hairs, root cap, leaves, stems, trichomes, phloem throughout the plant, guard cells, filaments of young stamens, stipules, papillae of stigmas, pollen, pollen tubes and the abscission zone of siliques.

The protein resides in the golgi apparatus membrane. It is found in the membrane. The catalysed reaction is a ribonucleoside 5'-triphosphate + 2 H2O = a ribonucleoside 5'-phosphate + 2 phosphate + 2 H(+). In terms of biological role, catalyzes the hydrolysis of phosphoanhydride bonds of nucleoside tri- and di-phosphates. Substrate preference is ATP &gt; ADP. Functions with APY2 to reduce extracellular ATP level which is essential for pollen germination and normal plant development. Plays a role in the regulation of stomatal function by modulating extracellular ATP levels in guard cells. The sequence is that of Apyrase 1 (APY1) from Arabidopsis thaliana (Mouse-ear cress).